The chain runs to 1347 residues: Probable serine/threonine-protein kinase DDB_G0288147 (1347 aa).

Residues 12–67 (NHRFEPYTLKHLTICKRCEKEIIGVSNSAQICYSCKNIYHTRCCKEIETKKLELIC) form a Phorbol-ester/DAG-type zinc finger. 3 disordered regions span residues 262-316 (PFNE…LNES), 333-402 (SNNS…KSSK), and 463-485 (DNNNNNNNNNNNNNNNSNNNNNN). Polar residues predominate over residues 271–282 (DSTLSASTYNRR). 3 stretches are compositionally biased toward low complexity: residues 286 to 316 (KNKNSNKNNTSSSSSAPASASSSKHSNLNES), 333 to 342 (SNNSNNLAAL), and 350 to 361 (TTTTTTTTTTTT). Composition is skewed to basic residues over residues 366–382 (NNHHHHQHHHQNSKSRK) and 389–402 (NKKKIKSPKNKSSK). Over residues 464-485 (NNNNNNNNNNNNNNNSNNNNNN) the composition is skewed to low complexity. Residues 599 to 854 (VKINVEIYDS…EILKVFYSLL (256 aa)) form the Protein kinase domain. Residues 605–613 (IYDSPLCTV) and Lys626 each bind ATP. The active-site Proton acceptor is Asp724. 2 disordered regions span residues 937-1241 (SERK…IVNP) and 1282-1310 (SSDSSNSLSDPESEEYSMPIKRSSSIRSP). Acidic residues predominate over residues 976–986 (IIDDDDDDDDD). Composition is skewed to low complexity over residues 1004–1015 (NINSENKNNNNV) and 1024–1062 (SSNSNNNNNNNNNNNNNNNNNNNNNNNNNNSNNNNNNNN). Polar residues-rich tracts occupy residues 1063–1083 (LRQNQFLGNDLNKSQDNNQLM) and 1118–1127 (LSSSQTSEIG). Low complexity-rich tracts occupy residues 1128 to 1241 (DNNT…IVNP) and 1282 to 1291 (SSDSSNSLSD).

It belongs to the protein kinase superfamily. TKL Ser/Thr protein kinase family.

It catalyses the reaction L-seryl-[protein] + ATP = O-phospho-L-seryl-[protein] + ADP + H(+). The enzyme catalyses L-threonyl-[protein] + ATP = O-phospho-L-threonyl-[protein] + ADP + H(+). The polypeptide is Probable serine/threonine-protein kinase DDB_G0288147 (Dictyostelium discoideum (Social amoeba)).